The following is a 297-amino-acid chain: MKSLIVALAIVLAVAFMTLAERKLMGSIQRRLGPNHVGFLGLLQPFADGIKLILKETVLPLEANHWLFVLAPFLSFYLALLNWLVIPLAKGVVLMDMDLSILLILAISSLGVYAIIYTGWSANSKYTLLGSLRSTAQMVSYEIAMSLLVLTVVYMGATLNLTELAYLNSGTVLLWSLWPMAMIGFVAALAETNRAPFDLPEAESELVAGFMTEHSAISFTFLFLGEYANIITISTVLNLMFLGFYNPLVIYLFIWIRATLPRLRFDQLLRLGWQYLLPFLIGFLMIQPSTLFVLDLF.

9 helical membrane passes run 1-21, 34-54, 66-86, 99-119, 139-159, 170-190, 206-228, 235-257, and 277-297; these read MKSL…TLAE, PNHV…KLIL, WLFV…WLVI, LSIL…IYTG, VSYE…GATL, GTVL…AALA, LVAG…GEYA, TVLN…IWIR, and LPFL…LDLF.

The protein belongs to the complex I subunit 1 family.

It localises to the mitochondrion inner membrane. It catalyses the reaction a ubiquinone + NADH + 5 H(+)(in) = a ubiquinol + NAD(+) + 4 H(+)(out). In terms of biological role, core subunit of the mitochondrial membrane respiratory chain NADH dehydrogenase (Complex I) that is believed to belong to the minimal assembly required for catalysis. Complex I functions in the transfer of electrons from NADH to the respiratory chain. The immediate electron acceptor for the enzyme is believed to be ubiquinone. This Hyaloraphidium curvatum (Lower fungus) protein is NADH-ubiquinone oxidoreductase chain 1.